Reading from the N-terminus, the 531-residue chain is Developmental and secondary metabolism regulator VE1 (531 aa).

The 195-residue stretch at 26–220 (NRSLWYQMTV…ADQGCPVRIR (195 aa)) folds into the Velvet domain. Residues 40–45 (ERARAC) carry the Nuclear localization signal motif. 2 disordered regions span residues 206-435 (LSKT…SQTS) and 447-517 (PVSP…SRAD). Over residues 244-253 (FERREEDFGR) the composition is skewed to basic and acidic residues. Residues 295 to 306 (YPPPPPPPPSYE) show a composition bias toward pro residues. Residues 348–357 (YAPTSQSPYS) are compositionally biased toward polar residues. Residues 381-390 (LKHELYDRRQ) show a composition bias toward basic and acidic residues. Low complexity predominate over residues 391 to 405 (STSTYVPPSPSVYST). Positions 416-427 (SYPPTPVAAPRP) are enriched in pro residues. The tract at residues 430-461 (MHSQTSLPALKIDQLVSPVSPLPPIEPQTGPA) is PEST. The span at 479-491 (FAQSTRPLHNGQR) shows a compositional bias: polar residues.

It belongs to the velvet family. VeA subfamily. As to quaternary structure, component of the heterotrimeric velvet complex composed of LAE1, VE1 and VELB; VE1 acting as a bridging protein between LAE1 and VELB. Interacts with VELB and VELC.

Its subcellular location is the nucleus. The protein resides in the cytoplasm. Component of the velvet transcription factor complex that controls sexual/asexual developmental ratio in response to light, promoting sexual development in the darkness while stimulating asexual sporulation under illumination. The velvet complex hat acts as a global regulator for secondary metabolite gene expression. Controls the expression of the cycotoxins fumonisins and fusarins gene cluster. Involved in cell wall integrity, cell surface hydrophobicity, hyphal polarity and conidiation pattern. Required for pathogenicity against maize seedlings. Involved in oxidative stress resistance by positively regulating the transcription of the catalase-encoding gene CAT2. In Gibberella moniliformis (strain M3125 / FGSC 7600) (Maize ear and stalk rot fungus), this protein is Developmental and secondary metabolism regulator VE1.